A 417-amino-acid polypeptide reads, in one-letter code: Ribonucleoside-diphosphate reductase small chain (417 aa).

The Fe cation site is built by Asp168, Glu199, and His202. Tyr206 is an active-site residue. Fe cation contacts are provided by Glu261, Glu297, and His300.

This sequence belongs to the ribonucleoside diphosphate reductase small chain family. In terms of assembly, heterotetramer composed of a homodimer of the large subunit (R1) and a homodimer of the small subunit (R2). Larger multisubunit protein complex are also active, composed of (R1)n(R2)n. The cofactor is Fe cation.

It carries out the reaction a 2'-deoxyribonucleoside 5'-diphosphate + [thioredoxin]-disulfide + H2O = a ribonucleoside 5'-diphosphate + [thioredoxin]-dithiol. Its function is as follows. Ribonucleoside-diphosphate reductase holoenzyme provides the precursors necessary for viral DNA synthesis. Allows virus growth in non-dividing cells. Catalyzes the biosynthesis of deoxyribonucleotides from the corresponding ribonucleotides. The protein is Ribonucleoside-diphosphate reductase small chain (RNR2) of Acanthamoeba polyphaga mimivirus (APMV).